We begin with the raw amino-acid sequence, 35 residues long: Photosystem II reaction center protein T (35 aa).

The helical transmembrane segment at 3–23 threads the bilayer; the sequence is ALVYTFLLVSTLGIIFFAIFF.

It belongs to the PsbT family. As to quaternary structure, PSII is composed of 1 copy each of membrane proteins PsbA, PsbB, PsbC, PsbD, PsbE, PsbF, PsbH, PsbI, PsbJ, PsbK, PsbL, PsbM, PsbT, PsbY, PsbZ, Psb30/Ycf12, at least 3 peripheral proteins of the oxygen-evolving complex and a large number of cofactors. It forms dimeric complexes.

It is found in the plastid. The protein localises to the chloroplast thylakoid membrane. In terms of biological role, found at the monomer-monomer interface of the photosystem II (PS II) dimer, plays a role in assembly and dimerization of PSII. PSII is a light-driven water plastoquinone oxidoreductase, using light energy to abstract electrons from H(2)O, generating a proton gradient subsequently used for ATP formation. The protein is Photosystem II reaction center protein T of Stangeria eriopus (Natal grass cycad).